We begin with the raw amino-acid sequence, 556 residues long: Genetic interactor of prohibitins 3, mitochondrial (556 aa).

The transit peptide at 1-21 directs the protein to the mitochondrion; sequence MLNLCHALRGVRQFSCSVIVK. The CP-type G domain occupies 113–305; the sequence is ESTLNDILNY…LFDLPGYSTS (193 aa).

The protein belongs to the TRAFAC class YlqF/YawG GTPase family. GEP3 subfamily.

Its subcellular location is the mitochondrion. Interacts genetically with prohibitins and thus may be involved in the mitochondrial lipid metabolism. In Saccharomyces cerevisiae (strain Lalvin EC1118 / Prise de mousse) (Baker's yeast), this protein is Genetic interactor of prohibitins 3, mitochondrial (GEP3).